A 303-amino-acid polypeptide reads, in one-letter code: Geranylgeranyl pyrophosphate synthase (303 aa).

Positions 32, 35, and 64 each coordinate isopentenyl diphosphate. Mg(2+) is bound by residues Asp71 and Asp75. Arg80 provides a ligand contact to dimethylallyl diphosphate. An isopentenyl diphosphate-binding site is contributed by Arg81. Dimethylallyl diphosphate is bound by residues Lys158, Thr159, Gln192, Lys209, and Lys219.

This sequence belongs to the FPP/GGPP synthase family. In terms of assembly, homooligomer. It depends on Mg(2+) as a cofactor.

The protein resides in the cytoplasm. The catalysed reaction is isopentenyl diphosphate + dimethylallyl diphosphate = (2E)-geranyl diphosphate + diphosphate. It catalyses the reaction isopentenyl diphosphate + (2E)-geranyl diphosphate = (2E,6E)-farnesyl diphosphate + diphosphate. The enzyme catalyses isopentenyl diphosphate + (2E,6E)-farnesyl diphosphate = (2E,6E,10E)-geranylgeranyl diphosphate + diphosphate. It functions in the pathway isoprenoid biosynthesis; farnesyl diphosphate biosynthesis; farnesyl diphosphate from geranyl diphosphate and isopentenyl diphosphate: step 1/1. The protein operates within isoprenoid biosynthesis; geranyl diphosphate biosynthesis; geranyl diphosphate from dimethylallyl diphosphate and isopentenyl diphosphate: step 1/1. It participates in isoprenoid biosynthesis; geranylgeranyl diphosphate biosynthesis; geranylgeranyl diphosphate from farnesyl diphosphate and isopentenyl diphosphate: step 1/1. Its function is as follows. Catalyzes the trans-addition of the three molecules of IPP onto DMAPP to form geranylgeranyl pyrophosphate, an important precursor of carotenoids and geranylated proteins. In Dictyostelium discoideum (Social amoeba), this protein is Geranylgeranyl pyrophosphate synthase (ggps1).